We begin with the raw amino-acid sequence, 826 residues long: Outer membrane usher protein YehB (826 aa).

Residues 1–22 (MLRMTPLASAIVALLLGIEAYA) form the signal peptide. Residues cysteine 809 and cysteine 825 are joined by a disulfide bond.

This sequence belongs to the fimbrial export usher family.

It is found in the cell outer membrane. Part of the yehABCD fimbrial operon. Could contribute to adhesion to various surfaces in specific environmental niches. Probably involved in the export and assembly of fimbrial subunits across the outer membrane. The polypeptide is Outer membrane usher protein YehB (yehB) (Escherichia coli (strain K12)).